Here is a 962-residue protein sequence, read N- to C-terminus: MPRSTWFKALLLFVALWAPLSQAETGWQPIQETIRKSDKDNRQYQAIRLDNGMVVLLVSDPQAVKSLSALVVPVGSLEDPEAYQGLAHYLEHMSLMGSKKYPQADSLAEYLKMHGGSHNASTAPYRTAFYLEVENDALPGAVDRLADAIAEPLLDKKYAERERNAVNAELTMARTRDGMRMAQVSAETINPAHPGSKFSGGNLETLSDKPGNPVQQALKDFHEKYYSANLMKAVIYSNKPLPELAKMAADTFGRVPNKESKKPEITVPVVTDAQKGIIIHYVPALPRKVLRVEFRIDNNSAKFRSKTDELITYLIGNRSPGTLSDWLQKQGLVEGISANSDPIVNGNSGVLAISASLTDKGLANRDQVVAAIFSYLNLLREKGIDKQYFDELANVLDIDFRYPSITRDMDYVEWLADTMIRVPVEHTLDAVNIADRYDAKAVKERLAMMTPQNARIWYISPKEPHNKTAYFVDAPYQVDKISAQTFADWQKKAADIALSLPELNPYIPDDFSLIKSEKKYDHPELIVDESNLRVVYAPSRYFASEPKADVSLILRNPKAMDSARNQVMFALNDYLAGLALDQLSNQASVGGISFSTNANNGLMINANGYTQRLPQLFQALLEGYFSYTATEEQLEQAKSWYNQMMDSAEKGKAFEQAIMPAQMLSQVPYFSRDERRKILPSITLKEVLAYRDALKSGARPEFMVIGNMTEAQATTLARDVQKQLGADGSEWCRNKDVVVDKKQSVIFEKAGNSTDSALAAVFVPTGYDEYTSSAYSSLLGQIVQPWFYNQLRTEEQLGYAVFAFPMSVGRQWGMGFLLQSNDKQPSFLWERYKAFFPTAEAKLRAMKPDEFAQIQQAVITQMLQAPQTLGEEASKLSKDFDRGNMRFDSRDKIVAQIKLLTPQKLADFFHQAVVEPQGMAILSQISGSQNGKAEYVHPEGWKVWENVSALQQTMPLMSEKNE.

The first 23 residues, 1-23, serve as a signal peptide directing secretion; sequence MPRSTWFKALLLFVALWAPLSQA. A Zn(2+)-binding site is contributed by His88. Glu91 serves as the catalytic Proton acceptor. Residues His92 and Glu169 each contribute to the Zn(2+) site.

This sequence belongs to the peptidase M16 family. As to quaternary structure, monomer. The cofactor is Zn(2+).

It localises to the periplasm. The enzyme catalyses Preferential cleavage of 16-Tyr-|-Leu-17 and 25-Phe-|-Tyr-26 bonds of oxidized insulin B chain. Also acts on other substrates of Mw less than 7 kDa such as insulin and glucagon.. Endopeptidase that degrades small peptides of less than 7 kDa, such as glucagon and insulin. The protein is Protease 3 (ptrA) of Shigella flexneri.